We begin with the raw amino-acid sequence, 302 residues long: MTVKIYDTPEVQDFLKIVAGLDQEGGNDRGKQIIHRILSDLYRTIDDFDITAEQYWSAVSLLNALGQASQFGLLSPGLGFDHYMDMRMDAADAEAKRTGGTPRTIEGPLYVAGAPEAEGFARMDDDPDTDGETMWLHGQVRDTAGKPIPGAKVEIWHCNSKGGYSFFDKSQTPYNLRRTIIADNEGYYRARSVIPSGYGVPEGAPTDQVLKLLGRHGERPAHIHYFISAPGHQHLTTQINLAGDPYTYDDFAFATRQDLAAEGKRVENHPAAQQYGVEGTVTEVIFNIELSPTAEEELQARP.

Residues Tyr164, Tyr198, His222, and His224 each coordinate Fe cation.

Belongs to the intradiol ring-cleavage dioxygenase family. Requires Fe(3+) as cofactor.

The enzyme catalyses catechol + O2 = cis,cis-muconate + 2 H(+). Its pathway is aromatic compound metabolism; beta-ketoadipate pathway; 5-oxo-4,5-dihydro-2-furylacetate from catechol: step 1/3. The protein is Catechol 1,2-dioxygenase (pheB) of Pseudomonas sp. (strain EST1001).